The chain runs to 379 residues: Leukocyte elastase inhibitor (379 aa).

Position 1 is an N-acetylmethionine (Met-1). Lys-137 and Lys-177 each carry N6-acetyllysine. Ser-300 is modified (phosphoserine). Positions 351-379 are CARD-binding motif (CBM); the sequence is NFTADHPFLFFIRHNSSGSILFLGRFSSP.

The protein belongs to the serpin family. Ov-serpin subfamily. Monomer. Interacts (via C-terminus) with CASP1; CASP4 (via CARD domain) and CASP5; these interactions regulate the activity of inflammatory caspases. Interacts with PRTN3. Interacts with GZMH. As to expression, in human bone marrow, present in all CD45+ populations. Expression levels are highest in the neutrophil lineage, intermediate in monocytic, and lowest in lymphocytic lineage. Within the neutrophil lineage, expression is highest in promyelocytes.

It localises to the secreted. It is found in the cytoplasm. The protein resides in the cytolytic granule. Its subcellular location is the early endosome. Its function is as follows. Neutrophil serine protease inhibitor that plays an essential role in the regulation of the innate immune response, inflammation and cellular homeostasis. Acts primarily to protect the cell from proteases released in the cytoplasm during stress or infection. These proteases are important in killing microbes but when released from granules, these potent enzymes also destroy host proteins and contribute to mortality. Regulates the activity of the neutrophil proteases elastase, cathepsin G, proteinase-3, chymase, chymotrypsin, and kallikrein-3. Also acts as a potent intracellular inhibitor of GZMH by directly blocking its proteolytic activity. During inflammation, limits the activity of inflammatory caspases CASP1, CASP4 and CASP5 by suppressing their caspase-recruitment domain (CARD) oligomerization and enzymatic activation. When secreted, promotes the proliferation of beta-cells via its protease inhibitory function. This Homo sapiens (Human) protein is Leukocyte elastase inhibitor (SERPINB1).